A 430-amino-acid polypeptide reads, in one-letter code: MKQALRVAFGFLMLWAAVLHAEVRIEITQGVDSARPIGVVPFQWAGQGAAPEDVGGIVAADLRNSGKFNPLDRSRLPQQPTSAQEVQPAAWSALGIDAVVVGQVTSNPDGSYQVAYQLVDTGGAPGTTLAQGSFKVTKQYLRYAAHAASDAVFEKLTGIKGAFRTRIAYVVQKNGGQFPYELRVSDYDGYNQFLVHRSSQPLMSPAWSPDGSKLAYVTFESGRSALVVQTLANGAVRQIASFPQHNGAPAFSPDGSKLAFALSKTGSLNLYVMDLGSGQIRQVTNGRSNNTEPSWFPDSQNLAFTSDQAGRPQVYKVNINGGTPQRITWEGSQNQDADVSADGKTMVMVSSAGGQQHIAKQDLEAGGVQVLSSTFLDETPSLAPNGTMVIYSSSQGMGSVLNLVSTDGRFKARLPATDGQVKSPAWSPYL.

The first 21 residues, 1-21, serve as a signal peptide directing secretion; the sequence is MKQALRVAFGFLMLWAAVLHA.

The protein belongs to the TolB family. The Tol-Pal system is composed of five core proteins: the inner membrane proteins TolA, TolQ and TolR, the periplasmic protein TolB and the outer membrane protein Pal. They form a network linking the inner and outer membranes and the peptidoglycan layer.

Its subcellular location is the periplasm. Part of the Tol-Pal system, which plays a role in outer membrane invagination during cell division and is important for maintaining outer membrane integrity. TolB occupies a key intermediary position in the Tol-Pal system because it communicates directly with both membrane-embedded components, Pal in the outer membrane and TolA in the inner membrane. This Klebsiella pneumoniae (strain 342) protein is Tol-Pal system protein TolB.